The following is a 27-amino-acid chain: uncharacterized protein (27 aa).

Residues 3 to 23 traverse the membrane as a helical segment; sequence IILWAVLIIFLIGLLVVTGVF.

It localises to the cell inner membrane. This is an uncharacterized protein from Escherichia coli (strain K12).